The chain runs to 650 residues: MFISSMNPVKKNNSGGILSRIQFPEDIRMLDIGDLTLLASDIRSAIIETVSRTGGHLASSLGTVELTLAVHKVFDTPKDRVIWDVGHQAYAHKLITGRRDVFSTLRQKGGISGFPKREESPYDVFNVGHSSTSISAASGIAEARDLKKERFKVVAIIGDGSMTAGLAFEGLNWSGDRKKDLVIILNDNEMSISPNVGALSSYLNHIMTGQTANKIRKDIRNFLKTIPSIGEQVLEFSRRAEESLKALIVPGALFEDLGFTYVGPLEGHRLDHLIRNLEDVRNMEGPVLVHVITRKGKGYKFAEAEPLRFHGICPFSPETGKPAAASESPVPPSYTQVFGNTIVKLARQNPRLVAITAAMCEGTGLNAFAEEFPERFFDVGIAEQHSVTFAAGLATEGILPVVAIYSSFLQRAYDQILHDVCLQNLPVVFALDRAGFVGEDGPTHHGLFDLSYLRSIPNMVVMAPKDENELQHMLHTAVACGKPAAVRYPRGSGVGVTMDSQPFSLELGKGEVLCEGGSLAILAVGDPVHPALTAAVQLREEGIYATVVNARFVKPLDRELLLRIVRSFKKILTVEENVLTGGFGSAILEFLEENDIHGIQVKRLGIRDEFAEQATQAEQRRLYGIDEQGIAAAVRSMMNMGRSSQMEACL.

Residues H87 and 128–130 (GHS) contribute to the thiamine diphosphate site. A Mg(2+)-binding site is contributed by D159. Thiamine diphosphate-binding positions include 160-161 (GS), N188, Y299, and E383. N188 serves as a coordination point for Mg(2+).

It belongs to the transketolase family. DXPS subfamily. Homodimer. Mg(2+) is required as a cofactor. Requires thiamine diphosphate as cofactor.

It catalyses the reaction D-glyceraldehyde 3-phosphate + pyruvate + H(+) = 1-deoxy-D-xylulose 5-phosphate + CO2. It participates in metabolic intermediate biosynthesis; 1-deoxy-D-xylulose 5-phosphate biosynthesis; 1-deoxy-D-xylulose 5-phosphate from D-glyceraldehyde 3-phosphate and pyruvate: step 1/1. Catalyzes the acyloin condensation reaction between C atoms 2 and 3 of pyruvate and glyceraldehyde 3-phosphate to yield 1-deoxy-D-xylulose-5-phosphate (DXP). The protein is 1-deoxy-D-xylulose-5-phosphate synthase of Syntrophus aciditrophicus (strain SB).